Consider the following 463-residue polypeptide: MAASMFYGRQLAAAALRSHRPQTTLRAAAQVLGNSGLFNKHGLQVQQQQQRTLSLHEYLSMELLQEAGVSVPKGFVAKSSDEAYAIAKKLGSKDVVIKAQVLAGGRGKGTFTSGLKGGVKIVFSPEEAKAVSSQMIGQKLITKQTGEKGRICNQVLVCERKYPRREYYFAITMERSFQGPVLIGSAQGGVNIEDVAAENPEAIVKEPIDIVEGIKKEQAVTLAQKMGFPSNIVDSAAENMIKLYNLFLKYDATMVEINPMVEDSDGKVLCMDAKINFDSNSAYRQKKIFDLQDWSQEDERDKEAANADINYIGLDGSIGCLVNGAGLAMATMDIIKLHGGTPANFLDVGGGATVQQVTEAFKLITSDKKVQAILVNIFGGIMRCDVIAQGIVMAVKDLEIRIPVVVRLQGTRVDDAKALIADSGLKILACDDLDEAAKMVVKLSEIVTLAKEAHVDVKFQLPI.

The transit peptide at 1–53 (MAASMFYGRQLAAAALRSHRPQTTLRAAAQVLGNSGLFNKHGLQVQQQQQRTL) directs the protein to the mitochondrion. The 228-residue stretch at 61 to 288 (MELLQEAGVS…SNSAYRQKKI (228 aa)) folds into the ATP-grasp domain. Lys78 is modified (N6-acetyllysine). Position 84 is a phosphotyrosine (Tyr84). Position 88 is an N6-acetyllysine; alternate (Lys88). At Lys88 the chain carries N6-succinyllysine; alternate. Residues Lys98 and 105–107 (GRG) contribute to the ATP site. An N6-acetyllysine mark is found at Lys129, Lys139, Lys143, and Lys216. Residues Asn258 and Asp272 each contribute to the Mg(2+) site. A Phosphoserine modification is found at Ser279. Substrate is bound at residue Asn323. Position 341 is a phosphothreonine (Thr341). Position 368 is an N6-acetyllysine (Lys368). 380-382 (GIM) serves as a coordination point for substrate. Position 438 is an N6-acetyllysine (Lys438).

Belongs to the succinate/malate CoA ligase beta subunit family. ATP-specific subunit beta subfamily. In terms of assembly, heterodimer of an alpha and a beta subunit. The beta subunit determines specificity for ATP. Interacts with ALAS2. Mg(2+) serves as cofactor.

The protein resides in the mitochondrion. It catalyses the reaction succinate + ATP + CoA = succinyl-CoA + ADP + phosphate. Its pathway is carbohydrate metabolism; tricarboxylic acid cycle; succinate from succinyl-CoA (ligase route): step 1/1. Functionally, ATP-specific succinyl-CoA synthetase functions in the citric acid cycle (TCA), coupling the hydrolysis of succinyl-CoA to the synthesis of ATP and thus represents the only step of substrate-level phosphorylation in the TCA. The beta subunit provides nucleotide specificity of the enzyme and binds the substrate succinate, while the binding sites for coenzyme A and phosphate are found in the alpha subunit. The polypeptide is Succinate--CoA ligase [ADP-forming] subunit beta, mitochondrial (Mus musculus (Mouse)).